A 333-amino-acid chain; its full sequence is HTH-type transcriptional regulator CbbR (333 aa).

Positions W5–T62 constitute an HTH lysR-type domain. The segment at residues Y22 to K41 is a DNA-binding region (H-T-H motif).

The protein belongs to the LysR transcriptional regulatory family.

Transcriptional activator for the cbb operon (cbbLSXFP) for RuBisCO and other Calvin cycle genes. Binds specifically to two binding sites in the cbbR-cbbL intergenic region. The polypeptide is HTH-type transcriptional regulator CbbR (cbbR) (Xanthobacter flavus).